We begin with the raw amino-acid sequence, 103 residues long: Sperm-associated antigen 11B (103 aa).

A signal peptide spans 1 to 25; the sequence is MRQRLLPSVTSLLLVALLFPGSSQA. Asparagine 29 is a glycosylation site (N-linked (GlcNAc...) asparagine).

This sequence belongs to the SPAG11 family. As to expression, specifically expressed in caput and proximal corpus of epididymis (at protein level). Present in the epididymal epithelium and on the sperm surface, with a subacrosomal equatorial distribution on the sperm head (at protein level).

It localises to the secreted. In terms of biological role, has antimicrobial activity against E.coli. Plays a role in the defense response in the male reproductive tract, contributing to sperm maturation, storage and protection. The sequence is that of Sperm-associated antigen 11B from Homo sapiens (Human).